Reading from the N-terminus, the 145-residue chain is Large ribosomal subunit protein uL13 (145 aa).

Belongs to the universal ribosomal protein uL13 family. Part of the 50S ribosomal subunit. Binds to Obg (AC P20964).

Its function is as follows. This protein is one of the early assembly proteins of the 50S ribosomal subunit, although it is not seen to bind rRNA by itself. It is important during the early stages of 50S assembly. The sequence is that of Large ribosomal subunit protein uL13 from Bacillus subtilis (strain 168).